Consider the following 214-residue polypeptide: Nigrelysin (214 aa).

The signal sequence occupies residues 1-21; that stretch reads MKNRLVIIVFMVVTMLCASLA. Positions 22–35 are excised as a propeptide; sequence LPLEEKEDEKDEKR. Residues 38–47 form a plays an important role in the hemolytic activity region; sequence EVAGAVMEGA. The interval 46 to 65 is N-terminal region; that stretch reads GANLGMSVLQTILQAIGDVS. 7 residues coordinate phosphocholine: Ser89, Val122, Ser140, Pro142, Tyr168, Tyr172, and Tyr173. The trp-rich region, which is important for the binding to lipid membrane stretch occupies residues 140–155; sequence SVPYDYNWYSNWWNVK. The short motif at 179–181 is the Cell attachment site, crucial for protein stability element; sequence KGD.

The protein belongs to the actinoporin family. Sea anemone subfamily. As to quaternary structure, octamer or nonamer in membranes. Monomer in the soluble state.

Its subcellular location is the secreted. The protein localises to the nematocyst. The protein resides in the target cell membrane. Its function is as follows. Pore-forming protein that forms cation-selective hydrophilic pores in cell membranes and causes cytolysis. Pore formation is a multi-step process that involves specific recognition of membrane sphingomyelin (but neither cholesterol nor phosphatidylcholine) using aromatic rich region and adjacent phosphocholine (POC) binding site, firm binding to the membrane (mainly driven by hydrophobic interactions) accompanied by the transfer of the N-terminal region to the lipid-water interface and finally pore formation after oligomerization of monomers. This protein shows potent hemolytic activity (EC(50)=0.09 nM), as well as potent cytotoxic activity on nucleated cells (L1210 cells). The cytotoxic process starts with cellular swelling that is time and dose dependent and occurs up to a critical volume, probably due to influx of water via pores opened by this actinoporin. The second phase consists of the final loss of membrane integrity that leads to cytolysis. This chain is Nigrelysin, found in Anthopleura nigrescens (Sea anemone).